A 651-amino-acid polypeptide reads, in one-letter code: UvrABC system protein B (651 aa).

One can recognise a Helicase ATP-binding domain in the interval 25–178 (RGISCGAKEQ…CQLQERLVEL (154 aa)). Position 38-45 (38-45 (GVTGSGKT)) interacts with ATP. The Beta-hairpin motif lies at 91 to 114 (YYDYYQPEAYIPQSDVYIEKDALI). Residues 427–591 (DGQIHDVMCE…IVPRTIQKPV (165 aa)) form the Helicase C-terminal domain. Positions 593–615 (TSLSERVGSSRKKVSRDTNTDPA) are disordered. In terms of domain architecture, UVR spans 616-651 (NRDIVELQKEMLLCAENLDFERAVEIRNEIKRLTAP).

This sequence belongs to the UvrB family. As to quaternary structure, forms a heterotetramer with UvrA during the search for lesions. Interacts with UvrC in an incision complex.

Its subcellular location is the cytoplasm. The UvrABC repair system catalyzes the recognition and processing of DNA lesions. A damage recognition complex composed of 2 UvrA and 2 UvrB subunits scans DNA for abnormalities. Upon binding of the UvrA(2)B(2) complex to a putative damaged site, the DNA wraps around one UvrB monomer. DNA wrap is dependent on ATP binding by UvrB and probably causes local melting of the DNA helix, facilitating insertion of UvrB beta-hairpin between the DNA strands. Then UvrB probes one DNA strand for the presence of a lesion. If a lesion is found the UvrA subunits dissociate and the UvrB-DNA preincision complex is formed. This complex is subsequently bound by UvrC and the second UvrB is released. If no lesion is found, the DNA wraps around the other UvrB subunit that will check the other stand for damage. The sequence is that of UvrABC system protein B from Anaplasma marginale (strain Florida).